Reading from the N-terminus, the 73-residue chain is Conotoxin im23b (73 aa).

The signal sequence occupies residues 1–22 (MIMRMTLTLFVLVVMTAASASG). Positions 23–28 (DALTEA) are excised as a propeptide. Intrachain disulfides connect Cys34–Cys41, Cys45–Cys55, and Cys56–Cys71.

It belongs to the conotoxin K superfamily. As to expression, expressed by the venom duct.

The protein resides in the secreted. Its function is as follows. Neurotoxin that induces excitatory symptoms in mice following intracranial administration. No symptoms are observed after intraperitoneal and intravenous (tail vein) injections. The chain is Conotoxin im23b from Conus imperialis (Imperial cone).